The chain runs to 202 residues: Large ribosomal subunit protein uL4 (202 aa).

A disordered region spans residues 47-67 (KTKAEVSGGGVKPWKQKGTGR).

Belongs to the universal ribosomal protein uL4 family. Part of the 50S ribosomal subunit.

In terms of biological role, one of the primary rRNA binding proteins, this protein initially binds near the 5'-end of the 23S rRNA. It is important during the early stages of 50S assembly. It makes multiple contacts with different domains of the 23S rRNA in the assembled 50S subunit and ribosome. Functionally, forms part of the polypeptide exit tunnel. This Dichelobacter nodosus (strain VCS1703A) protein is Large ribosomal subunit protein uL4.